The primary structure comprises 356 residues: 3-dehydroquinate synthase (356 aa).

NAD(+)-binding positions include 106–110 (GVVGD), 130–131 (TT), lysine 143, and lysine 152. Zn(2+)-binding residues include glutamate 185, histidine 248, and histidine 265.

It belongs to the sugar phosphate cyclases superfamily. Dehydroquinate synthase family. NAD(+) is required as a cofactor. Co(2+) serves as cofactor. It depends on Zn(2+) as a cofactor.

It localises to the cytoplasm. The enzyme catalyses 7-phospho-2-dehydro-3-deoxy-D-arabino-heptonate = 3-dehydroquinate + phosphate. It functions in the pathway metabolic intermediate biosynthesis; chorismate biosynthesis; chorismate from D-erythrose 4-phosphate and phosphoenolpyruvate: step 2/7. In terms of biological role, catalyzes the conversion of 3-deoxy-D-arabino-heptulosonate 7-phosphate (DAHP) to dehydroquinate (DHQ). This Caldanaerobacter subterraneus subsp. tengcongensis (strain DSM 15242 / JCM 11007 / NBRC 100824 / MB4) (Thermoanaerobacter tengcongensis) protein is 3-dehydroquinate synthase.